A 123-amino-acid chain; its full sequence is Ribosome-binding factor A (123 aa).

Belongs to the RbfA family. As to quaternary structure, monomer. Binds 30S ribosomal subunits, but not 50S ribosomal subunits or 70S ribosomes.

Its subcellular location is the cytoplasm. In terms of biological role, one of several proteins that assist in the late maturation steps of the functional core of the 30S ribosomal subunit. Associates with free 30S ribosomal subunits (but not with 30S subunits that are part of 70S ribosomes or polysomes). Required for efficient processing of 16S rRNA. May interact with the 5'-terminal helix region of 16S rRNA. This is Ribosome-binding factor A from Neisseria meningitidis serogroup A / serotype 4A (strain DSM 15465 / Z2491).